Here is a 92-residue protein sequence, read N- to C-terminus: Large ribosomal subunit protein eL43 (92 aa).

A C4-type zinc finger spans residues 39–60 (CSFCGKDSMKRAVVGIWSCKRC).

It belongs to the eukaryotic ribosomal protein eL43 family.

The sequence is that of Large ribosomal subunit protein eL43 (RpL37A) from Drosophila melanogaster (Fruit fly).